Consider the following 265-residue polypeptide: Auxin-responsive protein IAA22 (265 aa).

Disordered regions lie at residues 54–88 (LSTP…ERRP) and 172–199 (DGRE…SPAM). The segment covering 65-88 (LMNKMKPCSDEGHGSRDAAQERRP) has biased composition (basic and acidic residues). A PB1 domain is found at 91-194 (TMFVKVNLEG…GVDQVSERPD (104 aa)).

Belongs to the Aux/IAA family. As to quaternary structure, homodimers and heterodimers. In terms of tissue distribution, highly expressed in flowers. Expressed in roots and seedlings.

The protein localises to the nucleus. In terms of biological role, aux/IAA proteins are short-lived transcriptional factors that function as repressors of early auxin response genes at low auxin concentrations. In Oryza sativa subsp. japonica (Rice), this protein is Auxin-responsive protein IAA22 (IAA22).